The sequence spans 562 residues: NAD-dependent malic enzyme (562 aa).

Catalysis depends on Tyr-101, which acts as the Proton donor. Arg-154 contacts NAD(+). Lys-172 acts as the Proton acceptor in catalysis. Positions 243, 244, and 267 each coordinate a divalent metal cation. Residues Asp-267 and Asn-415 each contribute to the NAD(+) site.

This sequence belongs to the malic enzymes family. Homotetramer. Mg(2+) is required as a cofactor. Requires Mn(2+) as cofactor.

The enzyme catalyses (S)-malate + NAD(+) = pyruvate + CO2 + NADH. The catalysed reaction is oxaloacetate + H(+) = pyruvate + CO2. This chain is NAD-dependent malic enzyme, found in Vibrio parahaemolyticus serotype O3:K6 (strain RIMD 2210633).